Here is a 473-residue protein sequence, read N- to C-terminus: uncharacterized protein (473 aa).

The signal sequence occupies residues methionine 1–glycine 19.

This is an uncharacterized protein from Methanocaldococcus jannaschii (strain ATCC 43067 / DSM 2661 / JAL-1 / JCM 10045 / NBRC 100440) (Methanococcus jannaschii).